The sequence spans 53 residues: MPITLDPEKLAIVMKHRFQYKICRECGARNPPDAVKCRRCRSKNLRPKKFKKK.

This sequence belongs to the eukaryotic ribosomal protein eL40 family.

The chain is Large ribosomal subunit protein eL40 from Pyrobaculum neutrophilum (strain DSM 2338 / JCM 9278 / NBRC 100436 / V24Sta) (Thermoproteus neutrophilus).